The following is a 358-amino-acid chain: Protein RecA (358 aa).

67–74 (GPESSGKT) serves as a coordination point for ATP.

Belongs to the RecA family.

The protein resides in the cytoplasm. Can catalyze the hydrolysis of ATP in the presence of single-stranded DNA, the ATP-dependent uptake of single-stranded DNA by duplex DNA, and the ATP-dependent hybridization of homologous single-stranded DNAs. It interacts with LexA causing its activation and leading to its autocatalytic cleavage. The sequence is that of Protein RecA from Xenorhabdus bovienii (Xenorhabdus nematophila subsp. bovienii).